Consider the following 159-residue polypeptide: Cytochrome c-type biogenesis protein CcmE (159 aa).

At 1 to 8 the chain is on the cytoplasmic side; sequence MNIRRKNR. The helical; Signal-anchor for type II membrane protein transmembrane segment at 9–29 threads the bilayer; sequence LWIACAVLAGLALTIGLVLYA. Residues 30-159 are Periplasmic-facing; sequence LRSNIDLFYT…PASVYKDPAS (130 aa). Positions 130 and 134 each coordinate heme. A compositionally biased stretch (basic and acidic residues) spans 132–147; sequence ENYTPPEVEKAMEANH. The interval 132-159 is disordered; the sequence is ENYTPPEVEKAMEANHRRPASVYKDPAS.

Belongs to the CcmE/CycJ family.

The protein resides in the cell inner membrane. Its function is as follows. Heme chaperone required for the biogenesis of c-type cytochromes. Transiently binds heme delivered by CcmC and transfers the heme to apo-cytochromes in a process facilitated by CcmF and CcmH. This Shigella sonnei (strain Ss046) protein is Cytochrome c-type biogenesis protein CcmE.